We begin with the raw amino-acid sequence, 348 residues long: Holliday junction branch migration complex subunit RuvB (348 aa).

Positions 4–184 (ADRLIAASGR…FGIVQRLEFY (181 aa)) are large ATPase domain (RuvB-L). Residues Ile23, Arg24, Gly65, Lys68, Thr69, Thr70, 131–133 (EDF), Arg174, Tyr184, and Arg221 each bind ATP. Residue Thr69 participates in Mg(2+) binding. The segment at 185–255 (NDKDLSTIVS…VADMALNLLD (71 aa)) is small ATPAse domain (RuvB-S). Residues 258–348 (ERGFDHSDRR…GGDFSGPGDE (91 aa)) form a head domain (RuvB-H) region. DNA contacts are provided by Arg294, Arg313, and Arg318.

It belongs to the RuvB family. In terms of assembly, homohexamer. Forms an RuvA(8)-RuvB(12)-Holliday junction (HJ) complex. HJ DNA is sandwiched between 2 RuvA tetramers; dsDNA enters through RuvA and exits via RuvB. An RuvB hexamer assembles on each DNA strand where it exits the tetramer. Each RuvB hexamer is contacted by two RuvA subunits (via domain III) on 2 adjacent RuvB subunits; this complex drives branch migration. In the full resolvosome a probable DNA-RuvA(4)-RuvB(12)-RuvC(2) complex forms which resolves the HJ.

Its subcellular location is the cytoplasm. It catalyses the reaction ATP + H2O = ADP + phosphate + H(+). Functionally, the RuvA-RuvB-RuvC complex processes Holliday junction (HJ) DNA during genetic recombination and DNA repair, while the RuvA-RuvB complex plays an important role in the rescue of blocked DNA replication forks via replication fork reversal (RFR). RuvA specifically binds to HJ cruciform DNA, conferring on it an open structure. The RuvB hexamer acts as an ATP-dependent pump, pulling dsDNA into and through the RuvAB complex. RuvB forms 2 homohexamers on either side of HJ DNA bound by 1 or 2 RuvA tetramers; 4 subunits per hexamer contact DNA at a time. Coordinated motions by a converter formed by DNA-disengaged RuvB subunits stimulates ATP hydrolysis and nucleotide exchange. Immobilization of the converter enables RuvB to convert the ATP-contained energy into a lever motion, pulling 2 nucleotides of DNA out of the RuvA tetramer per ATP hydrolyzed, thus driving DNA branch migration. The RuvB motors rotate together with the DNA substrate, which together with the progressing nucleotide cycle form the mechanistic basis for DNA recombination by continuous HJ branch migration. Branch migration allows RuvC to scan DNA until it finds its consensus sequence, where it cleaves and resolves cruciform DNA. In Pseudomonas putida (strain ATCC 700007 / DSM 6899 / JCM 31910 / BCRC 17059 / LMG 24140 / F1), this protein is Holliday junction branch migration complex subunit RuvB.